Reading from the N-terminus, the 879-residue chain is Protein translocase subunit SecA (879 aa).

Residues glutamine 86, 104-108 (GEGKT), and aspartate 500 contribute to the ATP site. Residues cysteine 863, cysteine 865, cysteine 874, and histidine 875 each contribute to the Zn(2+) site.

It belongs to the SecA family. As to quaternary structure, monomer and homodimer. Part of the essential Sec protein translocation apparatus which comprises SecA, SecYEG and auxiliary proteins SecDF-YajC and YidC. Zn(2+) is required as a cofactor.

The protein resides in the cell inner membrane. It localises to the cytoplasm. It catalyses the reaction ATP + H2O + cellular proteinSide 1 = ADP + phosphate + cellular proteinSide 2.. Functionally, part of the Sec protein translocase complex. Interacts with the SecYEG preprotein conducting channel. Has a central role in coupling the hydrolysis of ATP to the transfer of proteins into and across the cell membrane, serving both as a receptor for the preprotein-SecB complex and as an ATP-driven molecular motor driving the stepwise translocation of polypeptide chains across the membrane. This Orientia tsutsugamushi (strain Ikeda) (Rickettsia tsutsugamushi) protein is Protein translocase subunit SecA.